An 84-amino-acid polypeptide reads, in one-letter code: ATP synthase subunit c (84 aa).

Helical transmembrane passes span 1–21 and 53–73; these read MLAWVIIVSIITAGLSVALVG and LLFALAFIETIMIFTLTVALI.

This sequence belongs to the ATPase C chain family. As to quaternary structure, F-type ATPases have 2 components, F(1) - the catalytic core - and F(0) - the membrane proton channel. F(1) has five subunits: alpha(3), beta(3), gamma(1), delta(1), epsilon(1). F(0) has three main subunits: a(1), b(2) and c(10-14). The alpha and beta chains form an alternating ring which encloses part of the gamma chain. F(1) is attached to F(0) by a central stalk formed by the gamma and epsilon chains, while a peripheral stalk is formed by the delta and b chains.

Its subcellular location is the cell inner membrane. In terms of biological role, f(1)F(0) ATP synthase produces ATP from ADP in the presence of a proton or sodium gradient. F-type ATPases consist of two structural domains, F(1) containing the extramembraneous catalytic core and F(0) containing the membrane proton channel, linked together by a central stalk and a peripheral stalk. During catalysis, ATP synthesis in the catalytic domain of F(1) is coupled via a rotary mechanism of the central stalk subunits to proton translocation. Its function is as follows. Key component of the F(0) channel; it plays a direct role in translocation across the membrane. A homomeric c-ring of between 10-14 subunits forms the central stalk rotor element with the F(1) delta and epsilon subunits. The sequence is that of ATP synthase subunit c from Dictyoglomus thermophilum (strain ATCC 35947 / DSM 3960 / H-6-12).